We begin with the raw amino-acid sequence, 581 residues long: Caprolactamase subunit beta (581 aa).

D41, H99, D102, and H124 together coordinate Zn(2+).

It belongs to the HyuB family. In terms of assembly, the caprolactamase is a heterotetramer composed of two alpha subunits (CapA) and two beta subunits (CapB). The cofactor is Zn(2+).

Activity is dependent on the presence of ATP and bicarbonate. The requirement for bicarbonate may be related to allosteric activation through conformational effects, but it is also conceivable that carboxyphosphate is formed and acts as a mediator in caprolactam activation, forming carboxy- or phospholactim. In terms of biological role, component of a caprolactamase involved in the degradation of caprolactam, an industrial compound mainly used in the production of Nylon 6. Catalyzes the ATP-dependent hydrolysis of the caprolactam ring to form 6-aminocaproic acid (6-ACA). The beta subunit is responsible for hydrolytic lactam ring opening. The enzyme cannot use 5-oxoproline. The protein is Caprolactamase subunit beta of Pseudomonas jessenii.